A 249-amino-acid polypeptide reads, in one-letter code: Putative TrmH family tRNA/rRNA methyltransferase (249 aa).

Positions 196, 216, and 225 each coordinate S-adenosyl-L-methionine.

The protein belongs to the class IV-like SAM-binding methyltransferase superfamily. RNA methyltransferase TrmH family.

This chain is Putative TrmH family tRNA/rRNA methyltransferase, found in Staphylococcus saprophyticus subsp. saprophyticus (strain ATCC 15305 / DSM 20229 / NCIMB 8711 / NCTC 7292 / S-41).